We begin with the raw amino-acid sequence, 124 residues long: Small ribosomal subunit protein bS6 (124 aa).

The interval 98-124 (EASPMLKAREERPRREDVREEAEEAAE) is disordered. Residues 104-115 (KAREERPRREDV) show a composition bias toward basic and acidic residues.

The protein belongs to the bacterial ribosomal protein bS6 family.

Its function is as follows. Binds together with bS18 to 16S ribosomal RNA. This chain is Small ribosomal subunit protein bS6, found in Tolumonas auensis (strain DSM 9187 / NBRC 110442 / TA 4).